We begin with the raw amino-acid sequence, 273 residues long: 3-methyl-2-oxobutanoate hydroxymethyltransferase (273 aa).

The Mg(2+) site is built by Asp49 and Asp88. 3-methyl-2-oxobutanoate-binding positions include 49 to 50 (DS), Asp88, and Lys118. Glu120 contacts Mg(2+). Glu187 (proton acceptor) is an active-site residue.

The protein belongs to the PanB family. As to quaternary structure, homodecamer; pentamer of dimers. It depends on Mg(2+) as a cofactor.

Its subcellular location is the cytoplasm. It carries out the reaction 3-methyl-2-oxobutanoate + (6R)-5,10-methylene-5,6,7,8-tetrahydrofolate + H2O = 2-dehydropantoate + (6S)-5,6,7,8-tetrahydrofolate. It participates in cofactor biosynthesis; (R)-pantothenate biosynthesis; (R)-pantoate from 3-methyl-2-oxobutanoate: step 1/2. Catalyzes the reversible reaction in which hydroxymethyl group from 5,10-methylenetetrahydrofolate is transferred onto alpha-ketoisovalerate to form ketopantoate. The polypeptide is 3-methyl-2-oxobutanoate hydroxymethyltransferase (Rhizobium etli (strain ATCC 51251 / DSM 11541 / JCM 21823 / NBRC 15573 / CFN 42)).